The primary structure comprises 122 residues: Insulin-like 3 (122 aa).

The N-terminal stretch at 1–15 (MRAPLLLMLLALGSA) is a signal peptide. 3 disulfides stabilise this stretch: Cys-29-Cys-107, Cys-41-Cys-120, and Cys-106-Cys-111.

Belongs to the insulin family. In terms of assembly, heterodimer of a B chain and an A chain linked by two disulfide bonds. Expressed exclusively in Leydig cells of the testis.

It is found in the secreted. Functionally, seems to play a role in testicular function. May be a trophic hormone with a role in testicular descent in fetal life. Is a ligand for LGR8 receptor. This Mus musculus (Mouse) protein is Insulin-like 3 (Insl3).